A 152-amino-acid polypeptide reads, in one-letter code: MDMIVEYLFCCKYTTNNKIIDLLEDLATRKVKCNLTAKLDQYGENYHQLYLDVLKNFKDVCTSTTQQDGTVIKNWSSIRKKNLKDLILKNFIIEVKYRYGFDDQTTENLKRDINMRLNFKTIGDKTIIIKNNKIKKIVGLNLTTNNYSWDES.

The protein belongs to the IIV-6 145L family.

This is an uncharacterized protein from Invertebrate iridescent virus 3 (IIV-3).